The primary structure comprises 242 residues: Zinc import ATP-binding protein ZnuC (242 aa).

An ABC transporter domain is found at 24 to 241 (INVKNLSFFY…EKFLKMFSSY (218 aa)). 56–63 (GPNGGGKT) contacts ATP.

The protein belongs to the ABC transporter superfamily. Zinc importer (TC 3.A.1.15.5) family. In terms of assembly, the complex is composed of two ATP-binding proteins (ZnuC), two transmembrane proteins (ZnuB) and a solute-binding protein (ZnuA).

The protein localises to the cell inner membrane. It catalyses the reaction Zn(2+)(out) + ATP(in) + H2O(in) = Zn(2+)(in) + ADP(in) + phosphate(in) + H(+)(in). Functionally, part of the ABC transporter complex ZnuABC involved in zinc import. Responsible for energy coupling to the transport system. The sequence is that of Zinc import ATP-binding protein ZnuC from Ehrlichia canis (strain Jake).